The chain runs to 444 residues: Methylenetetrahydrofolate--tRNA-(uracil-5-)-methyltransferase TrmFO (444 aa).

10-15 contacts FAD; the sequence is GAGLAG.

The protein belongs to the MnmG family. TrmFO subfamily. The cofactor is FAD.

Its subcellular location is the cytoplasm. The enzyme catalyses uridine(54) in tRNA + (6R)-5,10-methylene-5,6,7,8-tetrahydrofolate + NADH + H(+) = 5-methyluridine(54) in tRNA + (6S)-5,6,7,8-tetrahydrofolate + NAD(+). It catalyses the reaction uridine(54) in tRNA + (6R)-5,10-methylene-5,6,7,8-tetrahydrofolate + NADPH + H(+) = 5-methyluridine(54) in tRNA + (6S)-5,6,7,8-tetrahydrofolate + NADP(+). Functionally, catalyzes the folate-dependent formation of 5-methyl-uridine at position 54 (M-5-U54) in all tRNAs. This Streptococcus pneumoniae serotype 2 (strain D39 / NCTC 7466) protein is Methylenetetrahydrofolate--tRNA-(uracil-5-)-methyltransferase TrmFO.